A 262-amino-acid polypeptide reads, in one-letter code: MLSARVIPCLDVHGGRVVKGTNFVNLRDAGDPVEVARRYEAEGADELVFLDITASHEERAILLDVVRRTAEQVFMPLTVGGGVRTVEDVRALLSAGCDKVSINSSAVTNPDFIRQAADRFGRQCIVVNIDPKRVQKDGEEFWEVHINGGRKPTGLQAVQWAKRVEELGAGEIVLTSMDADGTCDGYDIPITRAVSEAVRIPVVASGGAGNPDHLVEAIRDGKADAVLAASIFHFGTHPIGPTKQHMAEAGIRVRMPAEPFAT.

Active-site residues include Asp11 and Asp130.

This sequence belongs to the HisA/HisF family. As to quaternary structure, heterodimer of HisH and HisF.

The protein resides in the cytoplasm. It catalyses the reaction 5-[(5-phospho-1-deoxy-D-ribulos-1-ylimino)methylamino]-1-(5-phospho-beta-D-ribosyl)imidazole-4-carboxamide + L-glutamine = D-erythro-1-(imidazol-4-yl)glycerol 3-phosphate + 5-amino-1-(5-phospho-beta-D-ribosyl)imidazole-4-carboxamide + L-glutamate + H(+). The protein operates within amino-acid biosynthesis; L-histidine biosynthesis; L-histidine from 5-phospho-alpha-D-ribose 1-diphosphate: step 5/9. Its function is as follows. IGPS catalyzes the conversion of PRFAR and glutamine to IGP, AICAR and glutamate. The HisF subunit catalyzes the cyclization activity that produces IGP and AICAR from PRFAR using the ammonia provided by the HisH subunit. The polypeptide is Imidazole glycerol phosphate synthase subunit HisF (Rhodopirellula baltica (strain DSM 10527 / NCIMB 13988 / SH1)).